The following is a 592-amino-acid chain: Aspartate--tRNA(Asp/Asn) ligase (592 aa).

Residue glutamate 175 coordinates L-aspartate. The segment at 199–202 is aspartate; the sequence is QQFK. L-aspartate is bound by residues arginine 221 and histidine 451. An ATP-binding site is contributed by 221-223; the sequence is RDE. Glutamate 485 is an ATP binding site. Arginine 492 provides a ligand contact to L-aspartate. 537 to 540 provides a ligand contact to ATP; that stretch reads GIDR.

Belongs to the class-II aminoacyl-tRNA synthetase family. Type 1 subfamily. In terms of assembly, homodimer.

The protein localises to the cytoplasm. It carries out the reaction tRNA(Asx) + L-aspartate + ATP = L-aspartyl-tRNA(Asx) + AMP + diphosphate. Functionally, aspartyl-tRNA synthetase with relaxed tRNA specificity since it is able to aspartylate not only its cognate tRNA(Asp) but also tRNA(Asn). Reaction proceeds in two steps: L-aspartate is first activated by ATP to form Asp-AMP and then transferred to the acceptor end of tRNA(Asp/Asn). The chain is Aspartate--tRNA(Asp/Asn) ligase from Phenylobacterium zucineum (strain HLK1).